The chain runs to 453 residues: Ankyrin repeat and SOCS box protein 16 (453 aa).

ANK repeat units lie at residues 56–85 (CRDP…AANM), 110–139 (KQTA…ELDA), 142–171 (GGRA…KANV), 175–204 (EGMT…SVNV), 209–238 (SEVT…DVAL), 242–279 (QGET…DPQA), and 283–312 (KRHT…SPGV). The SOCS box domain occupies 397 to 453 (FYSSALSMENQPRQLQHLARLAVRAQLGSHCRQAAAQLPLPPLLRDYLLLGVEGRIQ).

This sequence belongs to the ankyrin SOCS box (ASB) family.

The protein operates within protein modification; protein ubiquitination. Functionally, may be a substrate-recognition component of a SCF-like ECS (Elongin-Cullin-SOCS-box protein) E3 ubiquitin-protein ligase complex which mediates the ubiquitination and subsequent proteasomal degradation of target proteins. The polypeptide is Ankyrin repeat and SOCS box protein 16 (Asb16) (Mus musculus (Mouse)).